A 178-amino-acid polypeptide reads, in one-letter code: Large ribosomal subunit protein uL6 (178 aa).

The protein belongs to the universal ribosomal protein uL6 family. Part of the 50S ribosomal subunit.

This protein binds to the 23S rRNA, and is important in its secondary structure. It is located near the subunit interface in the base of the L7/L12 stalk, and near the tRNA binding site of the peptidyltransferase center. This chain is Large ribosomal subunit protein uL6, found in Nitrosococcus oceani (strain ATCC 19707 / BCRC 17464 / JCM 30415 / NCIMB 11848 / C-107).